A 298-amino-acid chain; its full sequence is Glutamyl-Q tRNA(Asp) synthetase (298 aa).

L-glutamate-binding positions include 9-13 and Glu45; that span reads RFAPS. A 'HIGH' region motif is present at residues 12 to 22; that stretch reads PSPSGELHFGS. 4 residues coordinate Zn(2+): Cys101, Cys103, Tyr115, and Cys119. L-glutamate-binding residues include Tyr172 and Arg190. The 'KMSKS' region signature appears at 228-232; the sequence is KLSKQ. ATP is bound at residue Lys231.

This sequence belongs to the class-I aminoacyl-tRNA synthetase family. GluQ subfamily. It depends on Zn(2+) as a cofactor.

Its function is as follows. Catalyzes the tRNA-independent activation of glutamate in presence of ATP and the subsequent transfer of glutamate onto a tRNA(Asp). Glutamate is transferred on the 2-amino-5-(4,5-dihydroxy-2-cyclopenten-1-yl) moiety of the queuosine in the wobble position of the QUC anticodon. The sequence is that of Glutamyl-Q tRNA(Asp) synthetase from Salmonella paratyphi A (strain ATCC 9150 / SARB42).